The following is a 70-amino-acid chain: MTTPKNVQVSEKTLEITQIKSTIGGKQNQRDTLRSLGLKRIGHTVVRKADAVTVGMINTIPHLVKVEEAK.

It belongs to the universal ribosomal protein uL30 family. In terms of assembly, part of the 50S ribosomal subunit.

In Renibacterium salmoninarum (strain ATCC 33209 / DSM 20767 / JCM 11484 / NBRC 15589 / NCIMB 2235), this protein is Large ribosomal subunit protein uL30.